The primary structure comprises 374 residues: Putative glutamate--cysteine ligase 2 (374 aa).

It belongs to the glutamate--cysteine ligase type 2 family. YbdK subfamily.

The enzyme catalyses L-cysteine + L-glutamate + ATP = gamma-L-glutamyl-L-cysteine + ADP + phosphate + H(+). In terms of biological role, ATP-dependent carboxylate-amine ligase which exhibits weak glutamate--cysteine ligase activity. The sequence is that of Putative glutamate--cysteine ligase 2 from Verminephrobacter eiseniae (strain EF01-2).